The following is a 150-amino-acid chain: SsrA-binding protein (150 aa).

A disordered region spans residues 127-150 (KRETEKQRDWQREKARIMKGDAKD).

It belongs to the SmpB family.

It is found in the cytoplasm. Functionally, required for rescue of stalled ribosomes mediated by trans-translation. Binds to transfer-messenger RNA (tmRNA), required for stable association of tmRNA with ribosomes. tmRNA and SmpB together mimic tRNA shape, replacing the anticodon stem-loop with SmpB. tmRNA is encoded by the ssrA gene; the 2 termini fold to resemble tRNA(Ala) and it encodes a 'tag peptide', a short internal open reading frame. During trans-translation Ala-aminoacylated tmRNA acts like a tRNA, entering the A-site of stalled ribosomes, displacing the stalled mRNA. The ribosome then switches to translate the ORF on the tmRNA; the nascent peptide is terminated with the 'tag peptide' encoded by the tmRNA and targeted for degradation. The ribosome is freed to recommence translation, which seems to be the essential function of trans-translation. This is SsrA-binding protein from Cupriavidus necator (strain ATCC 17699 / DSM 428 / KCTC 22496 / NCIMB 10442 / H16 / Stanier 337) (Ralstonia eutropha).